The sequence spans 710 residues: mRNA export factor crp79 (710 aa).

2 RRM domains span residues 19–102 and 222–292; these read IYVG…KLTI and HFKQ…PTTP. Residues 333 to 348 show a composition bias toward polar residues; that stretch reads QWGSVSTTGVSNQQNH. Residues 333 to 357 are disordered; that stretch reads QWGSVSTTGVSNQQNHPAAWNPDNK. Residues 401–474 form the RRM 3 domain; sequence EDLFSPFGSI…DRIRRLQAFF (74 aa). The segment covering 502-524 has biased composition (polar residues); that stretch reads TIRKPIESSTNKISENPTTLSSK. Residues 502–544 form a disordered region; sequence TIRKPIESSTNKISENPTTLSSKVENKNEPKTGENKEPSQTNE. The segment covering 525–538 has biased composition (basic and acidic residues); the sequence is VENKNEPKTGENKE.

The protein resides in the cytoplasm. It is found in the nucleus. Its function is as follows. Binds the poly(A) tail of mRNA. Involved in the export of mRNA from the nucleus to the cytoplasm. This chain is mRNA export factor crp79 (crp79), found in Schizosaccharomyces pombe (strain 972 / ATCC 24843) (Fission yeast).